A 261-amino-acid chain; its full sequence is GTP cyclohydrolase FolE2 (261 aa).

It belongs to the GTP cyclohydrolase IV family.

The enzyme catalyses GTP + H2O = 7,8-dihydroneopterin 3'-triphosphate + formate + H(+). The protein operates within cofactor biosynthesis; 7,8-dihydroneopterin triphosphate biosynthesis; 7,8-dihydroneopterin triphosphate from GTP: step 1/1. Converts GTP to 7,8-dihydroneopterin triphosphate. This chain is GTP cyclohydrolase FolE2, found in Geobacter metallireducens (strain ATCC 53774 / DSM 7210 / GS-15).